A 574-amino-acid chain; its full sequence is Myo-inositol transporter FST1 (574 aa).

Over 1-76 the chain is Cytoplasmic; sequence MGKSRQNSTT…VQFANPKHFT (76 aa). Residues 77 to 97 traverse the membrane as a helical segment; that stretch reads WLLVAFASMGGLLSGLDQSLI. Residues 98–115 lie on the Extracellular side of the membrane; that stretch reads SGANLFLPDDLGLTEHEN. The chain crosses the membrane as a helical span at residues 116 to 136; sequence SLVNSGMPLGAVGGALLLSPA. Residues 137–143 are Cytoplasmic-facing; that stretch reads NEYFGRK. Residues 144–164 form a helical membrane-spanning segment; sequence GAIIISIILYTIGAALEAGSI. Residues 165–173 are Extracellular-facing; sequence NFGMIVSSR. The chain crosses the membrane as a helical span at residues 174 to 194; the sequence is VILGLGVGLEGGTVPVYVAET. Residues 195–205 lie on the Cytoplasmic side of the membrane; the sequence is VERRIRGNLVS. A helical membrane pass occupies residues 206–226; the sequence is LYQFNIALGEVLGYAVGAIFL. Residues 227–233 are Extracellular-facing; sequence NVPGNWR. A helical transmembrane segment spans residues 234 to 254; the sequence is YILGSSLLFSTIMFFGMLFLP. The Cytoplasmic portion of the chain corresponds to 255-330; it reads ESPRFLIHQK…RARRALVYAN (76 aa). The chain crosses the membrane as a helical span at residues 331 to 351; that stretch reads IMILLGQLTGVNAIMYYMSVL. Residues 352-363 lie on the Extracellular side of the membrane; that stretch reads MNQIGFDKKESN. A helical transmembrane segment spans residues 364–384; the sequence is YMSLVGGGSLLLGTIPAIFLM. Topologically, residues 385–390 are cytoplasmic; it reads ERFGRR. The chain crosses the membrane as a helical span at residues 391-411; that stretch reads FWAITMLPGFFIGLVLIGVSY. The Extracellular segment spans residues 412–426; it reads QFDVETQLQTVEGLY. A helical membrane pass occupies residues 427–447; it reads LSGLIIYMGFFGSYACLTWVV. The Cytoplasmic segment spans residues 448 to 465; it reads PSEVYPTYLRSYGMTTSD. A helical transmembrane segment spans residues 466-486; it reads ALLFLASFIVTYNFTAMQNAM. Residues 487 to 490 are Extracellular-facing; sequence GKTG. A helical transmembrane segment spans residues 491-511; it reads LALGFYGGIAFIGEIYQIFFM. Residues 512-574 are Cytoplasmic-facing; that stretch reads PETKNKTLEE…PKDQVQVSHA (63 aa).

It belongs to the major facilitator superfamily. Sugar transporter (TC 2.A.1.1) family.

It localises to the cell membrane. The enzyme catalyses myo-inositol(out) + H(+)(out) = myo-inositol(in) + H(+)(in). Transporter for myo-inositol. Also appears to transport the polyketide mycotoxin fumonisin B1 (FB1). Does not appear to transport hexose sugars. The sequence is that of Myo-inositol transporter FST1 from Gibberella moniliformis (strain M3125 / FGSC 7600) (Maize ear and stalk rot fungus).